Reading from the N-terminus, the 225-residue chain is UPF0758 protein Shal_0429 (225 aa).

Positions 102–224 constitute an MPN domain; it reads ILSDPDLTRD…IVSFAERGWI (123 aa). Positions 173, 175, and 186 each coordinate Zn(2+). The short motif at 173 to 186 is the JAMM motif element; that stretch reads HNHPSGIAEPSTAD.

This sequence belongs to the UPF0758 family.

The protein is UPF0758 protein Shal_0429 of Shewanella halifaxensis (strain HAW-EB4).